A 162-amino-acid polypeptide reads, in one-letter code: Solute carrier family 2, facilitated glucose transporter member 4 (162 aa).

Residues 1-13 (TSIFETAGVGQPA) lie on the Extracellular side of the membrane. The chain crosses the membrane as a helical span at residues 14–34 (YATIGAGVVNTVFTLVSVFLV). Asparagine 23 is a D-glucose binding site. At 35–43 (ERAGRRTLH) the chain is on the cytoplasmic side. A helical transmembrane segment spans residues 44–64 (LLGLAGMCGCAILMTIALLLL). Residues 65 to 75 (ERLPAMSYVSI) lie on the Extracellular side of the membrane. Residues 76-96 (VAIFGFVAFFEIGPGPIPWFI) form a helical membrane-spanning segment. D-glucose is bound by residues glutamate 86 and tryptophan 94. Topologically, residues 97-107 (VAELFSQGPRP) are cytoplasmic. A helical transmembrane segment spans residues 108–128 (AAMAVAGFCNWTSNFIIGMGF). At 129–135 (QYIAXAM) the chain is on the extracellular side. The helical transmembrane segment at 136–156 (GPYVFLLFAVLLLAFFIFTFL) threads the bilayer. Residues 157 to 162 (KVPETR) lie on the Cytoplasmic side of the membrane.

It belongs to the major facilitator superfamily. Sugar transporter (TC 2.A.1.1) family. Glucose transporter subfamily. Binds to DAXX. Interacts via its N-terminus with SRFBP1. Interacts with NDUFA9. Interacts with TRARG1; the interaction is required for proper SLC2A4 recycling after insulin stimulation. Post-translationally, sumoylated. In terms of processing, palmitoylated. Palmitoylation by ZDHHC7 controls the insulin-dependent translocation of GLUT4 to the plasma membrane.

It is found in the cell membrane. Its subcellular location is the endomembrane system. It localises to the cytoplasm. The protein localises to the perinuclear region. It catalyses the reaction D-glucose(out) = D-glucose(in). Functionally, insulin-regulated facilitative glucose transporter, which plays a key role in removal of glucose from circulation. Response to insulin is regulated by its intracellular localization: in the absence of insulin, it is efficiently retained intracellularly within storage compartments in muscle and fat cells. Upon insulin stimulation, translocates from these compartments to the cell surface where it transports glucose from the extracellular milieu into the cell. The chain is Solute carrier family 2, facilitated glucose transporter member 4 from Canis lupus familiaris (Dog).